The following is a 231-amino-acid chain: Augmin complex subunit dgt2 (231 aa).

A coiled-coil region spans residues 128–199 (QEADLSCDQK…VQTKAELLRG (72 aa)).

In terms of assembly, component of the augmin complex composed of dgt2, dgt3, dgt4, dgt5, dgt6, msd1, msd5 and wac. The complex interacts directly or indirectly with microtubules and is required for centrosome-independent generation of spindle microtubules. dgt2 interacts directly with wac (via coiled coil). As to expression, in adult females, detected only in the abdomen with no expression in the head or thorax (at protein level).

The protein resides in the cytoplasm. The protein localises to the cytoskeleton. It localises to the spindle. It is found in the spindle pole. Its function is as follows. As part of the augmin complex, plays a role in centrosome-independent generation of spindle microtubules. The complex is required for mitotic spindle assembly through its involvement in localizing gamma-tubulin to spindle microtubules. dgt2 binds to microtubules in vitro. The protein is Augmin complex subunit dgt2 of Drosophila melanogaster (Fruit fly).